The primary structure comprises 149 residues: Large ribosomal subunit protein bL9 (149 aa).

It belongs to the bacterial ribosomal protein bL9 family.

In terms of biological role, binds to the 23S rRNA. This chain is Large ribosomal subunit protein bL9, found in Salmonella agona (strain SL483).